Here is a 482-residue protein sequence, read N- to C-terminus: G-protein coupled receptor 37-like 1 (482 aa).

The first 25 residues, 1-25, serve as a signal peptide directing secretion; that stretch reads MRWLWPLGVSLAVALAAGPERAPRG. Disordered regions lie at residues 25 to 56 and 78 to 119; these read GVWL…AKGL and PTQP…VQNP. Residues 26–134 are Extracellular-facing; the sequence is VWLQQGGHQP…ERSYGAYAVL (109 aa). Residues 40–54 are compositionally biased toward basic and acidic residues; that stretch reads QPDRSRRGAEREDAK. Asn-105 is a glycosylation site (N-linked (GlcNAc...) asparagine). The helical transmembrane segment at 135–155 threads the bilayer; that stretch reads LLALLLFAVGIVGSLAVMCIV. Over 156–167 the chain is Cytoplasmic; it reads WHSYYLKSAWNS. A helical membrane pass occupies residues 168–188; that stretch reads VLASLALWDFLVLFFCLPVVT. At 189–205 the chain is on the extracellular side; the sequence is FHEITKQRLLGAVSCRA. Cys-203 and Cys-286 form a disulfide bridge. A helical transmembrane segment spans residues 206–226; the sequence is VPFVEVSSLGVTTFSLCALGI. Over 227–251 the chain is Cytoplasmic; it reads DRFHVATSTLPKARPIEPCPSILAK. The chain crosses the membrane as a helical span at residues 252–272; that stretch reads LAVIWVGSMTLAAPELLLWQL. Residues 273 to 310 lie on the Extracellular side of the membrane; that stretch reads VREPSPAAGTVDTCIMKPSAHLPESLYSLVLTYQNARM. Residues 311-331 traverse the membrane as a helical segment; the sequence is WWSFGCYFCLPVLFTVTCQLV. Residues 332–361 lie on the Cytoplasmic side of the membrane; that stretch reads TWRVRGTPGRKPESRPGPQEPRGARPSSTV. The tract at residues 338 to 358 is disordered; the sequence is TPGRKPESRPGPQEPRGARPS. The chain crosses the membrane as a helical span at residues 362–382; that stretch reads AGLAAVHALCALPENVCNVVA. Residues 383–398 are Extracellular-facing; that stretch reads AYLSAALTRQTLELLG. The chain crosses the membrane as a helical span at residues 399 to 419; the sequence is LVTQFSTFFKAALTPLLLLCV. Residues 420-482 are Cytoplasmic-facing; the sequence is SRPLGRAFLD…PPLLALGTPC (63 aa). Thr-480 is subject to Phosphothreonine.

This sequence belongs to the G-protein coupled receptor 1 family. As to quaternary structure, interacts with the PTCH1 receptor. In terms of processing, undergoes metalloprotease-mediated cleavage which reduces its constitutive activity. Ubiquitinated.

The protein localises to the cell membrane. It localises to the cell projection. Its subcellular location is the cilium membrane. In terms of biological role, G-protein coupled receptor. Has been shown to bind the neuroprotective and glioprotective factor prosaposin (PSAP), leading to endocytosis followed by an ERK phosphorylation cascade. However, other studies have shown that prosaposin does not increase activity. It has been suggested that GPR37L1 is a constitutively active receptor which signals through the guanine nucleotide-binding protein G(s) subunit alpha. Participates in the regulation of postnatal cerebellar development by modulating the Shh pathway. Regulates baseline blood pressure in females and protects against cardiovascular stress in males. Mediates inhibition of astrocyte glutamate transporters and reduction in neuronal N-methyl-D-aspartate receptor activity. In Bos taurus (Bovine), this protein is G-protein coupled receptor 37-like 1 (GPR37L1).